Here is a 605-residue protein sequence, read N- to C-terminus: MQTSMVSAKVSIWLVCSVICSSLVRATQSVCSSQNTATTDGVRNQFQSNGWCSNNCAGHQFAIVQGFMCWCSDSEPSTQTSVGDCSGTCPGYGYEDCGNADKDLFGYIYLGQTPLSSVQSVETSTESSVYVSSSSITSSSSTSIVDTTTISPTLTSTSTTPLTTASTSTTPSTDITSALPTTTSTKLSTSIPTSTTSSTSTTTSTSSSTSTTVSVTSSTSTTTSTTSSTLISTSTSSSSSSTPTTTSSAPISTSTTSSTSTSTSTTSPTSSSAPTSSSNTTPTSTTFTTTSPSTAPSSTTVTYTSTTASPITSTITSVNLQTSLKYSVITVTSVHTMDTNISEITSRYLTMKKVITQIYSSTLGATPTSAVATTSASVGGRITNNNNSNTTNSNTPTNKSTEKKGYWDSPGKIAATFVVVGVVCLVIICILIYLIHHYRTRPARKAQDFENEYQSKFYQSKYPNEVTTTTLHTPSPSSNSTFSTPRLIYTDEKGQIMSESPSPRQSTYSLTAGSPPNDPSTLASPFHDPILPRRTSTFLHSPIQKQHEKMESNVTLGEDTVLVDQRLDPSKMLNTLANDDATNHSTISLSDNVDYSRRVLRLMNE.

Residues 1-26 (MQTSMVSAKVSIWLVCSVICSSLVRA) form the signal peptide. The WSC domain maps to 27 to 110 (TQSVCSSQNT…DKDLFGYIYL (84 aa)). Residues 151–305 (SPTLTSTSTT…PSSTTVTYTS (155 aa)) are disordered. 4 N-linked (GlcNAc...) asparagine glycosylation sites follow: Asn-340, Asn-386, Asn-389, and Asn-398. The span at 381-399 (RITNNNNSNTTNSNTPTNK) shows a compositional bias: low complexity. A disordered region spans residues 381-404 (RITNNNNSNTTNSNTPTNKSTEKK). Residues 415–435 (ATFVVVGVVCLVIICILIYLI) form a helical membrane-spanning segment. The N-linked (GlcNAc...) asparagine glycan is linked to Asn-479. The interval 494–521 (GQIMSESPSPRQSTYSLTAGSPPNDPST) is disordered. A compositionally biased stretch (polar residues) spans 497-521 (MSESPSPRQSTYSLTAGSPPNDPST). N-linked (GlcNAc...) asparagine glycosylation is found at Asn-553 and Asn-583.

It localises to the membrane. The polypeptide is Cell wall integrity and stress response component 4 (WSC4) (Saccharomyces cerevisiae (strain ATCC 204508 / S288c) (Baker's yeast)).